The sequence spans 461 residues: Cysteine--tRNA ligase (461 aa).

Residue Cys28 coordinates Zn(2+). The short motif at 30–40 is the 'HIGH' region element; it reads ITVYDLCHIGH. 3 residues coordinate Zn(2+): Cys209, His234, and Glu238. Residues 266–270 carry the 'KMSKS' region motif; that stretch reads KMSKS. Lys269 is a binding site for ATP.

This sequence belongs to the class-I aminoacyl-tRNA synthetase family. Monomer. The cofactor is Zn(2+).

The protein localises to the cytoplasm. The enzyme catalyses tRNA(Cys) + L-cysteine + ATP = L-cysteinyl-tRNA(Cys) + AMP + diphosphate. The protein is Cysteine--tRNA ligase of Salmonella arizonae (strain ATCC BAA-731 / CDC346-86 / RSK2980).